Consider the following 195-residue polypeptide: Imidazoleglycerol-phosphate dehydratase (195 aa).

The protein belongs to the imidazoleglycerol-phosphate dehydratase family.

The protein resides in the cytoplasm. It catalyses the reaction D-erythro-1-(imidazol-4-yl)glycerol 3-phosphate = 3-(imidazol-4-yl)-2-oxopropyl phosphate + H2O. It participates in amino-acid biosynthesis; L-histidine biosynthesis; L-histidine from 5-phospho-alpha-D-ribose 1-diphosphate: step 6/9. The chain is Imidazoleglycerol-phosphate dehydratase from Geobacter sulfurreducens (strain ATCC 51573 / DSM 12127 / PCA).